Reading from the N-terminus, the 764-residue chain is Polyadenylate-binding protein, cytoplasmic and nuclear (764 aa).

Positions 36 to 56 (VPEAQAEGAEAAPTPTAAPHP) are disordered. RRM domains lie at 60–138 (ASLY…WSQR), 148–225 (GNIF…HHIP), 241–318 (TNVY…RAQK), and 344–462 (VNLY…LAQR). Disordered regions lie at residues 375–420 (VMRD…GDRK) and 587–634 (GRGG…PRGN). Basic and acidic residues-rich tracts occupy residues 387 to 399 (KDEKDKENKKEGE) and 408 to 420 (GSEKKTEKKGDRK). Positions 587-596 (GRGGPAGRGP) are enriched in gly residues. Residues 597–613 (QGIPAGIPQGLQGGPAV) show a composition bias toward low complexity. The 78-residue stretch at 657–734 (GSFLQAQLAT…ALAVYDEYLK (78 aa)) folds into the PABC domain. Residues 735 to 745 (TQGQQPTQQPA) are compositionally biased toward polar residues. Residues 735-764 (TQGQQPTQQPAEANGEQPKAEEQKPEEQKA) are disordered. A compositionally biased stretch (basic and acidic residues) spans 752–764 (PKAEEQKPEEQKA).

This sequence belongs to the polyadenylate-binding protein type-1 family.

It is found in the cytoplasm. Its subcellular location is the nucleus. Its function is as follows. Binds the poly(A) tail of mRNA. Appears to be an important mediator of the multiple roles of the poly(A) tail in mRNA biogenesis, stability and translation. In the nucleus, involved in both mRNA cleavage and polyadenylation. Is also required for efficient mRNA export to the cytoplasm. Acts in concert with a poly(A)-specific nuclease (PAN) to affect poly(A) tail shortening, which may occur concomitantly with either nucleocytoplasmic mRNA transport or translational initiation. In the cytoplasm, stimulates translation initiation and regulates mRNA decay through translation termination-coupled poly(A) shortening, probably mediated by PAN. This chain is Polyadenylate-binding protein, cytoplasmic and nuclear (pabp-1), found in Neurospora crassa (strain ATCC 24698 / 74-OR23-1A / CBS 708.71 / DSM 1257 / FGSC 987).